Consider the following 748-residue polypeptide: Long-chain-alcohol oxidase FAO4B (748 aa).

The span at 1-18 shows a compositional bias: basic residues; the sequence is MEDVRRRNRGHPLLRSKK. The tract at residues 1 to 25 is disordered; it reads MEDVRRRNRGHPLLRSKKRGEGYNH. Helical transmembrane passes span 89-109 and 140-160; these read IILM…SLCL and FLLP…FYFF. Residue 238–253 participates in FAD binding; sequence CDAVVVGSGSGGGVAA. His-679 functions as the Proton acceptor in the catalytic mechanism.

The protein belongs to the GMC oxidoreductase family.

The protein localises to the membrane. It catalyses the reaction a long-chain primary fatty alcohol + O2 = a long-chain fatty aldehyde + H2O2. Long-chain fatty alcohol oxidase involved in the omega-oxidation pathway of lipid degradation. The chain is Long-chain-alcohol oxidase FAO4B (FAO4B) from Arabidopsis thaliana (Mouse-ear cress).